The sequence spans 169 residues: ATP synthase subunit b (169 aa).

Residues 11-31 (KLPLGNMLFIIISFLVLMVIL) form a helical membrane-spanning segment.

This sequence belongs to the ATPase B chain family. In terms of assembly, F-type ATPases have 2 components, F(1) - the catalytic core - and F(0) - the membrane proton channel. F(1) has five subunits: alpha(3), beta(3), gamma(1), delta(1), epsilon(1). F(0) has three main subunits: a(1), b(2) and c(10-14). The alpha and beta chains form an alternating ring which encloses part of the gamma chain. F(1) is attached to F(0) by a central stalk formed by the gamma and epsilon chains, while a peripheral stalk is formed by the delta and b chains.

The protein resides in the cell membrane. In terms of biological role, f(1)F(0) ATP synthase produces ATP from ADP in the presence of a proton or sodium gradient. F-type ATPases consist of two structural domains, F(1) containing the extramembraneous catalytic core and F(0) containing the membrane proton channel, linked together by a central stalk and a peripheral stalk. During catalysis, ATP synthesis in the catalytic domain of F(1) is coupled via a rotary mechanism of the central stalk subunits to proton translocation. Functionally, component of the F(0) channel, it forms part of the peripheral stalk, linking F(1) to F(0). The sequence is that of ATP synthase subunit b from Leuconostoc citreum (strain KM20).